The chain runs to 193 residues: Ganglioside GM2 activator (193 aa).

The N-terminal stretch at 1–20 is a signal peptide; that stretch reads MHRLPLLLLLGLLLAGSVAP. 4 disulfides stabilise this stretch: cysteine 39-cysteine 183, cysteine 99-cysteine 106, cysteine 112-cysteine 138, and cysteine 125-cysteine 136. N-linked (GlcNAc...) asparagine glycosylation occurs at asparagine 151.

Widely expressed. Most abundant in kidney and testis.

The protein resides in the lysosome. It carries out the reaction cholesterol(in) = cholesterol(out). In terms of biological role, binds gangliosides and stimulates ganglioside GM2 degradation. It stimulates only the breakdown of ganglioside GM2 and glycolipid GA2 by beta-hexosaminidase A. It extracts single GM2 molecules from membranes and presents them in soluble form to beta-hexosaminidase A for cleavage of N-acetyl-D-galactosamine and conversion to GM3. The large binding pocket can accommodate several single chain phospholipids and fatty acids, GM2A also exhibits some calcium-independent phospholipase activity. Has cholesterol transfer activity. This is Ganglioside GM2 activator from Mus musculus (Mouse).